The chain runs to 393 residues: S-adenosylmethionine synthase 2 (393 aa).

Residue Glu9 participates in Mg(2+) binding. His15 serves as a coordination point for ATP. Position 43 (Glu43) interacts with K(+). Residues Glu56 and Gln99 each contribute to the L-methionine site. Residues 167–169, 235–238, Asp246, 252–253, Ala269, Lys273, and Lys277 contribute to the ATP site; these read DGK, SGRF, and RK. Residue Asp246 participates in L-methionine binding. Lys277 contributes to the L-methionine binding site.

The protein belongs to the AdoMet synthase family. In terms of assembly, homotetramer. Mn(2+) is required as a cofactor. The cofactor is Mg(2+). Requires Co(2+) as cofactor. K(+) serves as cofactor. Mostly expressed in flowers, seedpods and roots, and, to a lower extent, in stems and leaves.

It localises to the cytoplasm. The catalysed reaction is L-methionine + ATP + H2O = S-adenosyl-L-methionine + phosphate + diphosphate. It functions in the pathway amino-acid biosynthesis; S-adenosyl-L-methionine biosynthesis; S-adenosyl-L-methionine from L-methionine: step 1/1. Its function is as follows. Catalyzes the formation of S-adenosylmethionine from methionine and ATP. The reaction comprises two steps that are both catalyzed by the same enzyme: formation of S-adenosylmethionine (AdoMet) and triphosphate, and subsequent hydrolysis of the triphosphate. The sequence is that of S-adenosylmethionine synthase 2 (MSAMS2) from Brassica juncea (Indian mustard).